A 268-amino-acid polypeptide reads, in one-letter code: Tryptophan synthase alpha chain (268 aa).

Residues glutamate 49 and aspartate 60 each act as proton acceptor in the active site.

The protein belongs to the TrpA family. Tetramer of two alpha and two beta chains.

The catalysed reaction is (1S,2R)-1-C-(indol-3-yl)glycerol 3-phosphate + L-serine = D-glyceraldehyde 3-phosphate + L-tryptophan + H2O. The protein operates within amino-acid biosynthesis; L-tryptophan biosynthesis; L-tryptophan from chorismate: step 5/5. The alpha subunit is responsible for the aldol cleavage of indoleglycerol phosphate to indole and glyceraldehyde 3-phosphate. The sequence is that of Tryptophan synthase alpha chain from Pectobacterium atrosepticum (strain SCRI 1043 / ATCC BAA-672) (Erwinia carotovora subsp. atroseptica).